A 2267-amino-acid chain; its full sequence is Acetyl-CoA carboxylase 1 (2267 aa).

The Biotin carboxylation domain occupies 38-544 (PIHSVLVANN…HTGWLDSRIA (507 aa)). In terms of domain architecture, ATP-grasp spans 190-384 (PESCNSIPEE…AAQVVVGMGV (195 aa)). Position 216–273 (216–273 (CQVVGYPAMIKASWGGGGKGIRKVHNDDEVRALFKQVQGEVPGSPIFIMKVASQSRHL)) interacts with ATP. Positions 339, 353, and 355 each coordinate Mg(2+). Mn(2+) contacts are provided by Glu339, Glu353, and Asn355. Arg357 is an active-site residue. One can recognise a Biotinyl-binding domain in the interval 671-745 (LQKEHDPSKL…QAADLIARLD (75 aa)). Lys712 carries the N6-biotinyllysine modification. Residues 1502–1843 (PYKPLDAIDL…YVGGPLPIMK (342 aa)) enclose the CoA carboxyltransferase N-terminal domain. Positions 1502–2163 (PYKPLDAIDL…EDALAKEIRE (662 aa)) are carboxyltransferase. CoA is bound by residues Arg1752, Lys2053, and Arg2055. A CoA carboxyltransferase C-terminal domain is found at 1847–2163 (PPDRPVTYFP…EDALAKEIRE (317 aa)).

As to quaternary structure, homodimer. Requires Mg(2+) as cofactor. It depends on Mn(2+) as a cofactor. Biotin serves as cofactor.

The protein localises to the cytoplasm. Its subcellular location is the cytosol. The catalysed reaction is hydrogencarbonate + acetyl-CoA + ATP = malonyl-CoA + ADP + phosphate + H(+). It catalyses the reaction N(6)-biotinyl-L-lysyl-[protein] + hydrogencarbonate + ATP = N(6)-carboxybiotinyl-L-lysyl-[protein] + ADP + phosphate + H(+). It functions in the pathway lipid metabolism; malonyl-CoA biosynthesis; malonyl-CoA from acetyl-CoA: step 1/1. In terms of biological role, multifunctional enzyme that catalyzes the carboxylation of acetyl-CoA, forming malonyl-CoA, which is used in the plastid for fatty acid synthesis and in the cytosol in various biosynthetic pathways including fatty acid elongation. This chain is Acetyl-CoA carboxylase 1 (ACC1), found in Oryza sativa subsp. japonica (Rice).